Reading from the N-terminus, the 145-residue chain is Protein MMF1, mitochondrial (145 aa).

The N-terminal 17 residues, 1–17 (MFLRNSVLRTAPVLRRG), are a transit peptide targeting the mitochondrion.

This sequence belongs to the RutC family.

The protein localises to the mitochondrion matrix. Its function is as follows. Plays a role in the maintenance of mitochondrial DNA. The chain is Protein MMF1, mitochondrial (MMF1) from Saccharomyces cerevisiae (strain ATCC 204508 / S288c) (Baker's yeast).